A 267-amino-acid polypeptide reads, in one-letter code: Type II pantothenate kinase (267 aa).

6–13 contacts ATP; sequence DAGGTLIK. The active-site Proton acceptor is the Glu-70. ATP contacts are provided by residues Thr-99, 121-125, Tyr-137, and Ser-225; that span reads GGMIQ.

It belongs to the type II pantothenate kinase family. Homodimer.

It is found in the cytoplasm. It catalyses the reaction (R)-pantothenate + ATP = (R)-4'-phosphopantothenate + ADP + H(+). It participates in cofactor biosynthesis; coenzyme A biosynthesis; CoA from (R)-pantothenate: step 1/5. Functionally, catalyzes the phosphorylation of pantothenate (Pan), the first step in CoA biosynthesis. This Staphylococcus aureus (strain Mu50 / ATCC 700699) protein is Type II pantothenate kinase.